Here is a 365-residue protein sequence, read N- to C-terminus: Protein RecA (365 aa).

81-88 contributes to the ATP binding site; it reads GPESSGKT.

It belongs to the RecA family.

Its subcellular location is the cytoplasm. Functionally, can catalyze the hydrolysis of ATP in the presence of single-stranded DNA, the ATP-dependent uptake of single-stranded DNA by duplex DNA, and the ATP-dependent hybridization of homologous single-stranded DNAs. It interacts with LexA causing its activation and leading to its autocatalytic cleavage. The chain is Protein RecA from Borreliella afzelii (strain PKo) (Borrelia afzelii).